Reading from the N-terminus, the 130-residue chain is Small ribosomal subunit protein uS9 (130 aa).

This sequence belongs to the universal ribosomal protein uS9 family.

The polypeptide is Small ribosomal subunit protein uS9 (Desulfosudis oleivorans (strain DSM 6200 / JCM 39069 / Hxd3) (Desulfococcus oleovorans)).